We begin with the raw amino-acid sequence, 307 residues long: D-alanine--D-alanine ligase (307 aa).

The ATP-grasp domain occupies 108–301 (KEVFAAAGLP…FPEFCAWMVE (194 aa)). Position 135–185 (135–185 (LPPPYVVKPNCEGSSVGVYIVQADANGPPRLAPDMPRDLMVETYIPGRELT)) interacts with ATP. Residues aspartate 252, glutamate 268, and asparagine 270 each coordinate Mg(2+).

This sequence belongs to the D-alanine--D-alanine ligase family. Requires Mg(2+) as cofactor. It depends on Mn(2+) as a cofactor.

Its subcellular location is the cytoplasm. It carries out the reaction 2 D-alanine + ATP = D-alanyl-D-alanine + ADP + phosphate + H(+). It functions in the pathway cell wall biogenesis; peptidoglycan biosynthesis. Cell wall formation. The chain is D-alanine--D-alanine ligase from Cereibacter sphaeroides (strain ATCC 17025 / ATH 2.4.3) (Rhodobacter sphaeroides).